The sequence spans 316 residues: Acetyl-coenzyme A carboxylase carboxyl transferase subunit alpha (316 aa).

The region spanning 40–293 is the CoA carboxyltransferase C-terminal domain; the sequence is LEKRSRDALR…GDLIAKTMKE (254 aa).

This sequence belongs to the AccA family. Acetyl-CoA carboxylase is a heterohexamer composed of biotin carboxyl carrier protein (AccB), biotin carboxylase (AccC) and two subunits each of ACCase subunit alpha (AccA) and ACCase subunit beta (AccD).

It localises to the cytoplasm. It catalyses the reaction N(6)-carboxybiotinyl-L-lysyl-[protein] + acetyl-CoA = N(6)-biotinyl-L-lysyl-[protein] + malonyl-CoA. It functions in the pathway lipid metabolism; malonyl-CoA biosynthesis; malonyl-CoA from acetyl-CoA: step 1/1. In terms of biological role, component of the acetyl coenzyme A carboxylase (ACC) complex. First, biotin carboxylase catalyzes the carboxylation of biotin on its carrier protein (BCCP) and then the CO(2) group is transferred by the carboxyltransferase to acetyl-CoA to form malonyl-CoA. The sequence is that of Acetyl-coenzyme A carboxylase carboxyl transferase subunit alpha from Mesorhizobium japonicum (strain LMG 29417 / CECT 9101 / MAFF 303099) (Mesorhizobium loti (strain MAFF 303099)).